A 387-amino-acid polypeptide reads, in one-letter code: Phosphoglycerate kinase (387 aa).

Residues 21 to 23, Arg-36, 59 to 62, Arg-113, and Arg-146 each bind substrate; these read DLN and HLGR. Residues Lys-197, Glu-314, and 340-343 contribute to the ATP site; that span reads GGDT.

The protein belongs to the phosphoglycerate kinase family. As to quaternary structure, monomer.

It localises to the cytoplasm. It carries out the reaction (2R)-3-phosphoglycerate + ATP = (2R)-3-phospho-glyceroyl phosphate + ADP. It functions in the pathway carbohydrate degradation; glycolysis; pyruvate from D-glyceraldehyde 3-phosphate: step 2/5. The polypeptide is Phosphoglycerate kinase (Pseudomonas paraeruginosa (strain DSM 24068 / PA7) (Pseudomonas aeruginosa (strain PA7))).